Here is a 358-residue protein sequence, read N- to C-terminus: Chromatin modification-related protein EAF3 (358 aa).

The region spanning 8–84 (KCLCYHGPLL…DEWVGLDRIR (77 aa)) is the Tudor-knot domain. Positions 103-184 (ELKNNGGKKK…KATPVLNKRS (82 aa)) are disordered. A compositionally biased stretch (low complexity) spans 132-168 (SRTSNSGSGTNTSASSTSASNPASSSSSGTTAAASSS). In terms of domain architecture, MRG spans 184–356 (SHPKIHIKVP…TSSQYEGVAL (173 aa)).

This sequence belongs to the MRG family. Component of the NuA4 histone acetyltransferase complex.

Its subcellular location is the nucleus. In terms of biological role, involved in deacetylation of histones, chromatin assembly and chromosome segregation. May act as a transcriptional oscillator, directing histone deacetylases to specific chromosomal domains. Component of the NuA4 histone acetyltransferase complex which is involved in transcriptional activation of selected genes principally by acetylation of nucleosomal histone H4 and H2A. The NuA4 complex is also involved in DNA repair. The chain is Chromatin modification-related protein EAF3 (EAF3) from Kluyveromyces lactis (strain ATCC 8585 / CBS 2359 / DSM 70799 / NBRC 1267 / NRRL Y-1140 / WM37) (Yeast).